A 508-amino-acid chain; its full sequence is Phenylalanine--tRNA ligase alpha subunit (508 aa).

Ala2 is subject to N-acetylalanine. Ser193 and Ser301 each carry phosphoserine. Lys311 carries the N6-acetyllysine modification. L-phenylalanine is bound by residues Thr329, 372-374, and Tyr412; that span reads QIE. Glu414 contacts Mg(2+). Position 438 (Phe438) interacts with L-phenylalanine.

The protein belongs to the class-II aminoacyl-tRNA synthetase family. Phe-tRNA synthetase alpha subunit type 2 subfamily. Heterotetramer; dimer of two heterodimers formed by FARSA and FARSB. Mg(2+) is required as a cofactor.

The protein localises to the cytoplasm. The catalysed reaction is tRNA(Phe) + L-phenylalanine + ATP = L-phenylalanyl-tRNA(Phe) + AMP + diphosphate + H(+). The chain is Phenylalanine--tRNA ligase alpha subunit (Farsa) from Rattus norvegicus (Rat).